We begin with the raw amino-acid sequence, 355 residues long: NADH-quinone oxidoreductase subunit H (355 aa).

The next 8 membrane-spanning stretches (helical) occupy residues 25–45 (IVRILVVSVVILLCVAYLILW), 91–111 (WLYLIAPVMTVVPAFAVWAVI), 126–146 (LLYAMAISSIGVYAVILAGWA), 170–190 (MGFALVLVLMTAGSLNLSEIV), 205–225 (FLSWNWLPLLPAFVVYFISGI), 252–272 (GMAFALFFLAEYINMIVISAL), 290–310 (FIPGIFWLVLKIFALLSVFIW), and 330–350 (VFLPVTVVWVVVVGFWMMSPL).

This sequence belongs to the complex I subunit 1 family. In terms of assembly, NDH-1 is composed of 14 different subunits. Subunits NuoA, H, J, K, L, M, N constitute the membrane sector of the complex.

It localises to the cell inner membrane. It catalyses the reaction a quinone + NADH + 5 H(+)(in) = a quinol + NAD(+) + 4 H(+)(out). In terms of biological role, NDH-1 shuttles electrons from NADH, via FMN and iron-sulfur (Fe-S) centers, to quinones in the respiratory chain. The immediate electron acceptor for the enzyme in this species is believed to be ubiquinone. Couples the redox reaction to proton translocation (for every two electrons transferred, four hydrogen ions are translocated across the cytoplasmic membrane), and thus conserves the redox energy in a proton gradient. This subunit may bind ubiquinone. The protein is NADH-quinone oxidoreductase subunit H of Burkholderia lata (strain ATCC 17760 / DSM 23089 / LMG 22485 / NCIMB 9086 / R18194 / 383).